The following is a 102-amino-acid chain: Large ribosomal subunit protein mL63 (102 aa).

It belongs to the mitochondrion-specific ribosomal protein mL63 family.

The protein localises to the mitochondrion. This Bos taurus (Bovine) protein is Large ribosomal subunit protein mL63 (MRPL57).